The sequence spans 214 residues: UPF0725 protein At1g19565 (214 aa).

Residues 56–92 are disordered; sequence EEEYEPSLPSSESPTDSCHADHESPDSPKYQQPAPGE.

Belongs to the UPF0725 (EMB2204) family.

The chain is UPF0725 protein At1g19565 from Arabidopsis thaliana (Mouse-ear cress).